The following is a 381-amino-acid chain: MKIVADENIPLLQPFFGSMGEIHTLPGREISNQHLRDADVLLVRSVTKVDERLLENTGVKFVGSATIGCNHVDLDYLTSRGIGFSNAPGCNASAVVEYVVSCLSVLSEQLGFELEDKTVGIIGRGEIGGRLERALTLLGLEVKSNDPPKEAAGEQNLFSLEEVLQCDIITLHTPLTDSGSYPTRELLNATIIENLRPDQILINTCRGEVIDEAALKGRLQKGDGLTVALDVWNNEPAIDVELAMLCHFATPHIAGYTLDGRTAGTEIIYQHLSRYLGLPVRHKLGQFLPEPPLRRMAFSSGVDPDWALHTAIRASYDVRHDDSQLKRTLRLDAPMRAQEFDRLRREYRVRRGFDRIKIELKGGKADLLATLSAVGFNLSSK.

Residues serine 45 and threonine 66 each coordinate substrate. NAD(+) is bound by residues aspartate 146 and threonine 173. Arginine 206 is a catalytic residue. Aspartate 230 is a binding site for NAD(+). Residue glutamate 235 is part of the active site. Residue histidine 252 is the Proton donor of the active site. Glycine 255 is an NAD(+) binding site. Tyrosine 256 is a substrate binding site.

Belongs to the D-isomer specific 2-hydroxyacid dehydrogenase family. PdxB subfamily. As to quaternary structure, homodimer.

It is found in the cytoplasm. It carries out the reaction 4-phospho-D-erythronate + NAD(+) = (R)-3-hydroxy-2-oxo-4-phosphooxybutanoate + NADH + H(+). It functions in the pathway cofactor biosynthesis; pyridoxine 5'-phosphate biosynthesis; pyridoxine 5'-phosphate from D-erythrose 4-phosphate: step 2/5. In terms of biological role, catalyzes the oxidation of erythronate-4-phosphate to 3-hydroxy-2-oxo-4-phosphonooxybutanoate. This is Erythronate-4-phosphate dehydrogenase from Hahella chejuensis (strain KCTC 2396).